The sequence spans 213 residues: N-(5'-phosphoribosyl)anthranilate isomerase (213 aa).

This sequence belongs to the TrpF family.

It catalyses the reaction N-(5-phospho-beta-D-ribosyl)anthranilate = 1-(2-carboxyphenylamino)-1-deoxy-D-ribulose 5-phosphate. It participates in amino-acid biosynthesis; L-tryptophan biosynthesis; L-tryptophan from chorismate: step 3/5. The protein is N-(5'-phosphoribosyl)anthranilate isomerase of Leptospira interrogans serogroup Icterohaemorrhagiae serovar copenhageni (strain Fiocruz L1-130).